Here is a 486-residue protein sequence, read N- to C-terminus: Ribosome biogenesis protein YTM1 (486 aa).

The segment at 12–99 (RQLPINLFTR…ESQIDVEYVR (88 aa)) is ubiquitin-like (UBL) domain. WD repeat units lie at residues 212–251 (GHTG…PTEH), 305–345 (GHTG…AGAL), 349–388 (PFDK…SLIS), 392–432 (PTTS…TALF), and 454–486 (VLGE…ARGE). The interval 249 to 299 (TEHQVPADPVSYLPGQGTKKRRKLEKDQEKAPIEGLTDGDATGEGGWRRAP) is disordered.

Belongs to the WD repeat WDR12/YTM1 family. Component of the NOP7 complex, composed of ERB1, NOP7 and YTM1. The complex is held together by ERB1, which interacts with NOP7 via its N-terminal domain and with YTM1 via a high-affinity interaction between the seven-bladed beta-propeller domains of the 2 proteins. The NOP7 complex associates with the 66S pre-ribosome. Interacts (via UBL domain) with MDN1 (via VWFA/MIDAS domain).

The protein resides in the nucleus. The protein localises to the nucleolus. Its subcellular location is the nucleoplasm. Functionally, component of the NOP7 complex, which is required for maturation of the 25S and 5.8S ribosomal RNAs and formation of the 60S ribosome. This is Ribosome biogenesis protein YTM1 from Cryptococcus neoformans var. neoformans serotype D (strain B-3501A) (Filobasidiella neoformans).